A 265-amino-acid chain; its full sequence is Tetrapyrrole-binding protein, chloroplastic (265 aa).

The segment at 1–24 (MATTNSLHHHHHSSPSYTHHRNNL) is disordered. The N-terminal 69 residues, 1–69 (MATTNSLHHH…TAVSAVSTTN (69 aa)), are a transit peptide targeting the chloroplast. Basic residues predominate over residues 7–23 (LHHHHHSSPSYTHHRNN).

As to quaternary structure, interacts with CHLH, the protoporphyrin IX-binding subunit of Mg-chelatase. Monomer or extremely compact dimer.

It is found in the plastid. The protein localises to the chloroplast membrane. Regulates chlorophyll synthesis and plastid-to-nucleus signal transduction by binding both the product and the substrate of Mg-chelatase, an enzyme that produces magnesium-protoporphyrin IX (Mg-Proto). Also activates Mg-chelatase. Neither binds abscisic acid (ABA) nor is involved in ABA signaling. This Arabidopsis thaliana (Mouse-ear cress) protein is Tetrapyrrole-binding protein, chloroplastic (GUN4).